The following is a 334-amino-acid chain: Methionine adenosyltransferase 2 subunit beta (334 aa).

NADP(+)-binding positions include 37 to 40 (TGLL), 60 to 62 (FRR), 71 to 72 (NL), Cys-93, Arg-97, Tyr-159, and Leu-185. Thr-309 is subject to Phosphothreonine. Residues 319 to 334 (LWPFLIDKRWRQTVFH) form a required for interaction with MAT2A region.

Belongs to the dTDP-4-dehydrorhamnose reductase family. MAT2B subfamily. Heterotrimer; composed of a catalytic MAT2A homodimer that binds one regulatory MAT2B chain. Heterohexamer; composed of a central, catalytic MAT2A homotetramer flanked on either side by a regulatory MAT2B chain. NADP binding increases the affinity for MAT2A.

The protein operates within amino-acid biosynthesis; S-adenosyl-L-methionine biosynthesis; S-adenosyl-L-methionine from L-methionine: step 1/1. In terms of biological role, regulatory subunit of S-adenosylmethionine synthetase 2, an enzyme that catalyzes the formation of S-adenosylmethionine from methionine and ATP. Regulates MAT2A catalytic activity by changing its kinetic properties, increasing its affinity for L-methionine. Can bind NADP (in vitro). This chain is Methionine adenosyltransferase 2 subunit beta (MAT2B), found in Bos taurus (Bovine).